The following is a 365-amino-acid chain: tRNA 2-selenouridine synthase (365 aa).

Residues 15-138 (LVNDHPIMDA…MRQFLIETID (124 aa)) enclose the Rhodanese domain. Residue C98 is the S-selanylcysteine intermediate of the active site.

This sequence belongs to the SelU family. Monomer.

It catalyses the reaction 5-methylaminomethyl-2-thiouridine(34) in tRNA + selenophosphate + (2E)-geranyl diphosphate + H2O + H(+) = 5-methylaminomethyl-2-selenouridine(34) in tRNA + (2E)-thiogeraniol + phosphate + diphosphate. The catalysed reaction is 5-methylaminomethyl-2-thiouridine(34) in tRNA + (2E)-geranyl diphosphate = 5-methylaminomethyl-S-(2E)-geranyl-thiouridine(34) in tRNA + diphosphate. It carries out the reaction 5-methylaminomethyl-S-(2E)-geranyl-thiouridine(34) in tRNA + selenophosphate + H(+) = 5-methylaminomethyl-2-(Se-phospho)selenouridine(34) in tRNA + (2E)-thiogeraniol. The enzyme catalyses 5-methylaminomethyl-2-(Se-phospho)selenouridine(34) in tRNA + H2O = 5-methylaminomethyl-2-selenouridine(34) in tRNA + phosphate. Its function is as follows. Involved in the post-transcriptional modification of the uridine at the wobble position (U34) of tRNA(Lys), tRNA(Glu) and tRNA(Gln). Catalyzes the conversion of 2-thiouridine (S2U-RNA) to 2-selenouridine (Se2U-RNA). Acts in a two-step process involving geranylation of 2-thiouridine (S2U) to S-geranyl-2-thiouridine (geS2U) and subsequent selenation of the latter derivative to 2-selenouridine (Se2U) in the tRNA chain. The chain is tRNA 2-selenouridine synthase from Shewanella pealeana (strain ATCC 700345 / ANG-SQ1).